The chain runs to 388 residues: Alanine racemase (388 aa).

Lys44 functions as the Proton acceptor; specific for D-alanine in the catalytic mechanism. At Lys44 the chain carries N6-(pyridoxal phosphate)lysine. A substrate-binding site is contributed by Arg142. The active-site Proton acceptor; specific for L-alanine is the Tyr273. Substrate is bound at residue Met321.

It belongs to the alanine racemase family. Pyridoxal 5'-phosphate is required as a cofactor.

It carries out the reaction L-alanine = D-alanine. The protein operates within amino-acid biosynthesis; D-alanine biosynthesis; D-alanine from L-alanine: step 1/1. Catalyzes the interconversion of L-alanine and D-alanine. May also act on other amino acids. This is Alanine racemase (alr) from Mycobacterium leprae (strain TN).